A 346-amino-acid polypeptide reads, in one-letter code: 4-hydroxy-2-oxovalerate aldolase (346 aa).

The region spanning 8–260 is the Pyruvate carboxyltransferase domain; the sequence is VTVHDMTLRD…ETGVDVFKIQ (253 aa). 16 to 17 contacts substrate; sequence RD. A Mn(2+)-binding site is contributed by Asp-17. The active-site Proton acceptor is the His-20. Residues Ser-170 and His-199 each contribute to the substrate site. 2 residues coordinate Mn(2+): His-199 and His-201. A substrate-binding site is contributed by Tyr-290.

It belongs to the 4-hydroxy-2-oxovalerate aldolase family.

The catalysed reaction is (S)-4-hydroxy-2-oxopentanoate = acetaldehyde + pyruvate. This chain is 4-hydroxy-2-oxovalerate aldolase, found in Polaromonas naphthalenivorans (strain CJ2).